We begin with the raw amino-acid sequence, 126 residues long: MGKEQNPRRVAENEAFAKTKMLRTSPQKLNLVAAMIRGKKVDKALADLTFSSKRIAGDVKKCLQSAIANAENNHNLDVDNLIVAEAWVGKNLVMKRGRPRARGRYGKIMKPFSEITIKVRQVEERA.

Belongs to the universal ribosomal protein uL22 family. In terms of assembly, part of the 50S ribosomal subunit.

Its function is as follows. This protein binds specifically to 23S rRNA; its binding is stimulated by other ribosomal proteins, e.g. L4, L17, and L20. It is important during the early stages of 50S assembly. It makes multiple contacts with different domains of the 23S rRNA in the assembled 50S subunit and ribosome. Functionally, the globular domain of the protein is located near the polypeptide exit tunnel on the outside of the subunit, while an extended beta-hairpin is found that lines the wall of the exit tunnel in the center of the 70S ribosome. The chain is Large ribosomal subunit protein uL22 from Paracoccus denitrificans (strain Pd 1222).